Consider the following 1914-residue polypeptide: Diacylglycerol kinase eta (1914 aa).

The segment covering 1–10 (MSHLKLDTLH) has biased composition (basic and acidic residues). Residues 1 to 37 (MSHLKLDTLHVQRSPRGSRRSSRSSGRSSACSSGSIS) are disordered. Over residues 23–37 (RSSGRSSACSSGSIS) the composition is skewed to low complexity. A PH domain is found at 82-175 (AIIKEGFLLK…WLGSLKTATA (94 aa)). Phorbol-ester/DAG-type zinc fingers lie at residues 195-245 (HHHW…IANC) and 268-319 (PHQW…AVAC). A DAGKc domain is found at 350 to 486 (GNFSPLLVFV…DRWSIMVFEK (137 aa)). 5 disordered regions span residues 621–642 (EKDQINSKERRNSRSLRSSEKE), 783–805 (GANIDDAGNRLSPCSDGGENTPT), 1016–1053 (TLCSEHVGPPKPPRKKSLSALSRTQAHPRRRNSSPPRI), 1116–1135 (QHRGGDNDSEYPEHQQTPTN), and 1175–1216 (PNTI…TVSL). The span at 1175–1187 (PNTILTTSTSPTK) shows a compositional bias: polar residues. The 64-residue stretch at 1851 to 1914 (WSVNEVVTWL…LQAIKDLSEN (64 aa)) folds into the SAM domain.

Belongs to the eukaryotic diacylglycerol kinase family.

The protein localises to the cytoplasm. The enzyme catalyses a 1,2-diacyl-sn-glycerol + ATP = a 1,2-diacyl-sn-glycero-3-phosphate + ADP + H(+). Functionally, phosphorylates diacylglycerol (DAG) to generate phosphatidic acid (PA). This is Diacylglycerol kinase eta from Drosophila sechellia (Fruit fly).